The sequence spans 244 residues: NH(3)-dependent NAD(+) synthetase (244 aa).

29–36 (GISGGIDS) contributes to the ATP binding site. Asp-35 serves as a coordination point for Mg(2+). Residue Arg-113 participates in deamido-NAD(+) binding. Thr-133 contacts ATP. Glu-138 lines the Mg(2+) pocket. Deamido-NAD(+)-binding residues include Lys-146 and Asp-153. Residues Lys-162 and Thr-184 each coordinate ATP. Deamido-NAD(+) is bound at residue 230-231 (HK).

This sequence belongs to the NAD synthetase family. Homodimer.

It catalyses the reaction deamido-NAD(+) + NH4(+) + ATP = AMP + diphosphate + NAD(+) + H(+). The protein operates within cofactor biosynthesis; NAD(+) biosynthesis; NAD(+) from deamido-NAD(+) (ammonia route): step 1/1. Catalyzes the ATP-dependent amidation of deamido-NAD to form NAD. Uses ammonia as a nitrogen source. The polypeptide is NH(3)-dependent NAD(+) synthetase (Mesoplasma florum (strain ATCC 33453 / NBRC 100688 / NCTC 11704 / L1) (Acholeplasma florum)).